A 251-amino-acid chain; its full sequence is Prolactin-7B1 (251 aa).

A signal peptide spans 1–29 (MHLSLTQQCLWPLQILLVSNLLLWENVAA). The N-linked (GlcNAc...) asparagine glycan is linked to N73. Disulfide bonds link C100–C216 and C233–C241.

It belongs to the somatotropin/prolactin family.

The protein resides in the secreted. This Rattus norvegicus (Rat) protein is Prolactin-7B1 (Prl7b1).